We begin with the raw amino-acid sequence, 537 residues long: Chaperonin GroEL 1 (537 aa).

Residues 29 to 32 (TLGP), 86 to 90 (DGTTT), G413, 478 to 480 (NAA), and D494 contribute to the ATP site.

Belongs to the chaperonin (HSP60) family. In terms of assembly, forms a cylinder of 14 subunits composed of two heptameric rings stacked back-to-back. Interacts with the co-chaperonin GroES.

It is found in the cytoplasm. It carries out the reaction ATP + H2O + a folded polypeptide = ADP + phosphate + an unfolded polypeptide.. In terms of biological role, together with its co-chaperonin GroES, plays an essential role in assisting protein folding. The GroEL-GroES system forms a nano-cage that allows encapsulation of the non-native substrate proteins and provides a physical environment optimized to promote and accelerate protein folding. The sequence is that of Chaperonin GroEL 1 from Corynebacterium efficiens (strain DSM 44549 / YS-314 / AJ 12310 / JCM 11189 / NBRC 100395).